A 399-amino-acid polypeptide reads, in one-letter code: Developmentally-regulated G-protein 2 (399 aa).

Residues 63-288 (GRVALIGFPS…LLARMWDEMG (226 aa)) enclose the OBG-type G domain. Residues 69 to 76 (GFPSVGKS), 115 to 119 (DLPGI), and 246 to 249 (NKID) contribute to the GTP site. One can recognise a TGS domain in the interval 288–366 (GLVRVYSKPQ…EDEDVVQIVK (79 aa)). Positions 372–399 (EGGRGRFKSHSNAPARIADREKKAPLKQ) are disordered. The segment covering 388-399 (IADREKKAPLKQ) has biased composition (basic and acidic residues).

The protein belongs to the TRAFAC class OBG-HflX-like GTPase superfamily. OBG GTPase family.

The protein localises to the cytoplasm. In terms of biological role, binds GDP and GTP, and has low GTPase activity. In Arabidopsis thaliana (Mouse-ear cress), this protein is Developmentally-regulated G-protein 2 (DRG2).